The sequence spans 407 residues: Aminomethyltransferase, mitochondrial (407 aa).

Residues 1–29 constitute a mitochondrion transit peptide; the sequence is MRGGLWQLGQSITRRLGQSDKKTIARRCY. 3 residues coordinate substrate: Glu234, Arg265, and Tyr403.

Belongs to the GcvT family. As to quaternary structure, the glycine cleavage system is composed of four proteins: P, T, L and H.

It localises to the mitochondrion. The enzyme catalyses N(6)-[(R)-S(8)-aminomethyldihydrolipoyl]-L-lysyl-[protein] + (6S)-5,6,7,8-tetrahydrofolate = N(6)-[(R)-dihydrolipoyl]-L-lysyl-[protein] + (6R)-5,10-methylene-5,6,7,8-tetrahydrofolate + NH4(+). Its function is as follows. The glycine cleavage system catalyzes the degradation of glycine. The protein is Aminomethyltransferase, mitochondrial (GDCST) of Flaveria pringlei.